Here is a 255-residue protein sequence, read N- to C-terminus: Putative cysteine-rich repeat secretory protein 32 (255 aa).

Residues M1–S28 form the signal peptide. Gnk2-homologous domains follow at residues Y35–S136 and Y143–F252.

Belongs to the cysteine-rich repeat secretory protein family.

The protein resides in the secreted. The sequence is that of Putative cysteine-rich repeat secretory protein 32 (CRRSP32) from Arabidopsis thaliana (Mouse-ear cress).